Consider the following 206-residue polypeptide: Protein Nef (206 aa).

A lipid anchor (N-myristoyl glycine; by host) is attached at Gly-2. Ser-6 is modified (phosphoserine; by host). The tract at residues 62 to 65 (QNEE) is acidic; interacts with host PACS1 and PACS2; stabilizes the interaction of NEF/MHC-I with host AP1M1; necessary for MHC-I internalization. An SH3-binding; interaction with Src family tyrosine kinases region spans residues 69 to 78 (PVRPQVPLRP). Positions 72 to 75 (PQVP) match the PxxP; stabilizes the interaction of NEF/MHC-I with host AP1M1; necessary for MHC-I internalization motif. The segment at 108–124 (EILDLWVYHTQGFFPDW) is mediates dimerization, Nef-PTE1 interaction. Residues 148 to 180 (LEPEEVERANEGDNNILLHPICQHGQEDEAREV) form a binding to ATP6V1H region. The Dileucine internalization motif; necessary for CD4 internalization motif lies at 164-165 (LL). Positions 174-175 (ED) match the Diacidic; necessary for CD4 internalization motif.

This sequence belongs to the lentivirus primate group Nef protein family. As to quaternary structure, monomer; cytosolic form. Homodimer; membrane bound form. Interacts with Nef associated p21-activated kinase (PAK2); this interaction activates PAK2. Associates with the Nef-MHC-I-AP1 complex; this complex is required for MHC-I internalization. Interacts (via C-terminus) with host PI3-kinase. Interacts with host PACS1; this interaction seems to be weak. Interacts with host PACS2. Interacts with host LCK and MAPK3; these interactions inhibit the kinase activity of the latter. Interacts with host ATP6V1H; this interaction may play a role in CD4 endocytosis. Associates with the CD4-Nef-AP2 complex; this complex is required for CD4 internalization. Interacts with host AP2 subunit alpha and AP2 subunit sigma2. Interacts with TCR-zeta chain; this interaction up-regulates the Fas ligand (FasL) surface expression. Interacts with host HCK, LYN, and SRC; these interactions activate the Src family kinases. Interacts with MAP3K5; this interaction inhibits the Fas and TNFR-mediated death signals. Interacts with beta-COP and PTE1. Interacts with human RACK1; this increases Nef phosphorylation by PKC. Interacts with TP53; this interaction decreases the half-life of TP53, protecting the infected cell against p53-mediated apoptosis. The virion-associated Nef proteins are cleaved by the viral protease to release the soluble C-terminal core protein. Nef is probably cleaved concomitantly with viral structural proteins on maturation of virus particles. Post-translationally, myristoylated. In terms of processing, phosphorylated on serine residues, probably by host PKCdelta and theta.

The protein localises to the host cell membrane. It localises to the virion. The protein resides in the secreted. Its subcellular location is the host Golgi apparatus membrane. Factor of infectivity and pathogenicity, required for optimal virus replication. Alters numerous pathways of T-lymphocyte function and down-regulates immunity surface molecules in order to evade host defense and increase viral infectivity. Alters the functionality of other immunity cells, like dendritic cells, monocytes/macrophages and NK cells. In terms of biological role, in infected CD4(+) T-lymphocytes, down-regulates the surface MHC-I, mature MHC-II, CD4, CD28, CCR5 and CXCR4 molecules. Mediates internalization and degradation of host CD4 through the interaction of with the cytoplasmic tail of CD4, the recruitment of AP-2 (clathrin adapter protein complex 2), internalization through clathrin coated pits, and subsequent transport to endosomes and lysosomes for degradation. Diverts host MHC-I molecules to the trans-Golgi network-associated endosomal compartments by an endocytic pathway to finally target them for degradation. MHC-I down-regulation may involve AP-1 (clathrin adapter protein complex 1) or possibly Src family kinase-ZAP70/Syk-PI3K cascade recruited by PACS2. In consequence infected cells are masked for immune recognition by cytotoxic T-lymphocytes. Decreasing the number of immune receptors also prevents reinfection by more HIV particles (superinfection). Down-regulates host SERINC3 and SERINC5 thereby excluding these proteins from the viral particles. Virion infectivity is drastically higher when SERINC3 or SERINC5 are excluded from the viral envelope, because these host antiviral proteins impair the membrane fusion event necessary for subsequent virion penetration. Its function is as follows. Bypasses host T-cell signaling by inducing a transcriptional program nearly identical to that of anti-CD3 cell activation. Interaction with TCR-zeta chain up-regulates the Fas ligand (FasL). Increasing surface FasL molecules and decreasing surface MHC-I molecules on infected CD4(+) cells send attacking cytotoxic CD8+ T-lymphocytes into apoptosis. Functionally, plays a role in optimizing the host cell environment for viral replication without causing cell death by apoptosis. Protects the infected cells from apoptosis in order to keep them alive until the next virus generation is ready to strike. Inhibits the Fas and TNFR-mediated death signals by blocking MAP3K5/ASK1. Decreases the half-life of TP53, protecting the infected cell against p53-mediated apoptosis. Inhibits the apoptotic signals regulated by the Bcl-2 family proteins through the formation of a Nef/PI3-kinase/PAK2 complex that leads to activation of PAK2 and induces phosphorylation of host BAD. Extracellular Nef protein targets CD4(+) T-lymphocytes for apoptosis by interacting with CXCR4 surface receptors. This Simian immunodeficiency virus (isolate MB66) (SIV-cpz) protein is Protein Nef.